A 142-amino-acid chain; its full sequence is Large ribosomal subunit protein uL13 (142 aa).

This sequence belongs to the universal ribosomal protein uL13 family. Part of the 50S ribosomal subunit.

Functionally, this protein is one of the early assembly proteins of the 50S ribosomal subunit, although it is not seen to bind rRNA by itself. It is important during the early stages of 50S assembly. This chain is Large ribosomal subunit protein uL13, found in Salmonella agona (strain SL483).